Consider the following 349-residue polypeptide: Protein pelota homolog (349 aa).

The protein belongs to the eukaryotic release factor 1 family. Pelota subfamily. Monomer. The cofactor is a divalent metal cation.

The protein resides in the cytoplasm. Functionally, may function in recognizing stalled ribosomes, interact with stem-loop structures in stalled mRNA molecules, and effect endonucleolytic cleavage of the mRNA. May play a role in the release non-functional ribosomes and degradation of damaged mRNAs. Has endoribonuclease activity. The chain is Protein pelota homolog from Nitrosopumilus maritimus (strain SCM1).